We begin with the raw amino-acid sequence, 1024 residues long: Beta-galactosidase (1024 aa).

Substrate-binding residues include Asn103 and Asp202. Asp202 is a binding site for Na(+). Mg(2+)-binding residues include Glu417, His419, and Glu462. Substrate contacts are provided by residues Glu462 and 538-541 (EYAH). Residue Glu462 is the Proton donor of the active site. Glu538 acts as the Nucleophile in catalysis. Asn598 contacts Mg(2+). Residues Phe602 and Asn605 each coordinate Na(+). The substrate site is built by Asn605 and Trp1000.

This sequence belongs to the glycosyl hydrolase 2 family. In terms of assembly, homotetramer. The cofactor is Mg(2+). Na(+) serves as cofactor.

It carries out the reaction Hydrolysis of terminal non-reducing beta-D-galactose residues in beta-D-galactosides.. This chain is Beta-galactosidase, found in Escherichia coli (strain ATCC 8739 / DSM 1576 / NBRC 3972 / NCIMB 8545 / WDCM 00012 / Crooks).